The chain runs to 686 residues: tRNA (guanine(37)-N(1))-methyltransferase (686 aa).

Residues 206-244 (GGPSSVSLTEDTDGSEQPQGLPRAAAAPPPPSNKRRASY) form a disordered region. Residues His428, 466-467 (DL), 495-496 (DG), and Asn530 each bind S-adenosyl-L-methionine.

Belongs to the class I-like SAM-binding methyltransferase superfamily. TRM5/TYW2 family. As to quaternary structure, monomer.

The protein resides in the mitochondrion matrix. It localises to the nucleus. Its subcellular location is the cytoplasm. It carries out the reaction guanosine(37) in tRNA + S-adenosyl-L-methionine = N(1)-methylguanosine(37) in tRNA + S-adenosyl-L-homocysteine + H(+). Functionally, specifically methylates the N1 position of guanosine-37 in various cytoplasmic and mitochondrial tRNAs. Methylation is not dependent on the nature of the nucleoside 5' of the target nucleoside. This is the first step in the biosynthesis of wybutosine (yW), a modified base adjacent to the anticodon of tRNAs and required for accurate decoding. In Leishmania major, this protein is tRNA (guanine(37)-N(1))-methyltransferase.